The primary structure comprises 184 residues: NADH-quinone oxidoreductase subunit B (184 aa).

C37, C38, C103, and C132 together coordinate [4Fe-4S] cluster.

The protein belongs to the complex I 20 kDa subunit family. As to quaternary structure, NDH-1 is composed of 14 different subunits. Subunits NuoB, C, D, E, F, and G constitute the peripheral sector of the complex. It depends on [4Fe-4S] cluster as a cofactor.

The protein resides in the cell membrane. The catalysed reaction is a quinone + NADH + 5 H(+)(in) = a quinol + NAD(+) + 4 H(+)(out). Its function is as follows. NDH-1 shuttles electrons from NADH, via FMN and iron-sulfur (Fe-S) centers, to quinones in the respiratory chain. The immediate electron acceptor for the enzyme in this species is believed to be a menaquinone. Couples the redox reaction to proton translocation (for every two electrons transferred, four hydrogen ions are translocated across the cytoplasmic membrane), and thus conserves the redox energy in a proton gradient. The sequence is that of NADH-quinone oxidoreductase subunit B from Mycolicibacterium vanbaalenii (strain DSM 7251 / JCM 13017 / BCRC 16820 / KCTC 9966 / NRRL B-24157 / PYR-1) (Mycobacterium vanbaalenii).